A 426-amino-acid polypeptide reads, in one-letter code: Cdc25-like protein phosphatase twine (426 aa).

Positions 1–27 (MASKRLMLDVEEEDDESGACGQENFDP) are disordered. A Rhodanese domain is found at 265–371 (SQGGYEIIDC…FFGLYSQLCQ (107 aa)). Residue cysteine 318 is part of the active site.

The protein belongs to the MPI phosphatase family. Expressed in developing male and female germ cells.

It catalyses the reaction O-phospho-L-tyrosyl-[protein] + H2O = L-tyrosyl-[protein] + phosphate. In terms of biological role, required during meiosis. Regulates the transition from the extended G2 phase to the onset of the first meiotic division. The polypeptide is Cdc25-like protein phosphatase twine (twe) (Drosophila melanogaster (Fruit fly)).